The sequence spans 657 residues: Methionine--tRNA ligase (657 aa).

Positions 13–23 (YYPSGNLHIGH) match the 'HIGH' region motif. A 'KMSKS' region motif is present at residues 308–312 (KMSKS). Lys-311 is a binding site for ATP. The region spanning 557–657 (DFDKVEIKAA…SAIPNGAVIK (101 aa)) is the tRNA-binding domain.

Belongs to the class-I aminoacyl-tRNA synthetase family. MetG type 2B subfamily. In terms of assembly, homodimer.

It is found in the cytoplasm. It carries out the reaction tRNA(Met) + L-methionine + ATP = L-methionyl-tRNA(Met) + AMP + diphosphate. Functionally, is required not only for elongation of protein synthesis but also for the initiation of all mRNA translation through initiator tRNA(fMet) aminoacylation. The polypeptide is Methionine--tRNA ligase (Staphylococcus aureus (strain MRSA252)).